The sequence spans 541 residues: Formimidoyltransferase-cyclodeaminase (541 aa).

The tract at residues 1–181 is formiminotransferase N-subdomain; that stretch reads MSQLVECVPN…GATVTGARKF (181 aa). The active-site For formimidoyltransferase activity is H82. Residue 163–172 participates in folate binding; sequence GPSSFVPSWG. Residues 182–326 are formiminotransferase C-subdomain; sequence LIAFNINLLS…PKERIIEYLV (145 aa). The tract at residues 327-334 is linker; it reads PDSGPEQS. Positions 335-541 are cyclodeaminase/cyclohydrolase; that stretch reads LLDTSLRGFV…VLGSLEARKE (207 aa). D412 (for cyclodeaminase activity) is an active-site residue. A Phosphoserine modification is found at S520.

In the C-terminal section; belongs to the cyclodeaminase/cyclohydrolase family. It in the N-terminal section; belongs to the formiminotransferase family. In terms of assembly, homooctamer, including four polyglutamate binding sites. The subunits are arranged as a tetramer of dimers, and form a planar ring-shaped structure.

Its subcellular location is the cytoplasm. The protein resides in the cytoskeleton. It localises to the microtubule organizing center. The protein localises to the centrosome. It is found in the centriole. Its subcellular location is the golgi apparatus. It carries out the reaction 5-formimidoyltetrahydrofolate + L-glutamate = N-formimidoyl-L-glutamate + (6S)-5,6,7,8-tetrahydrofolate. It catalyses the reaction (6S)-5-formyl-5,6,7,8-tetrahydrofolate + L-glutamate = N-formyl-L-glutamate + (6S)-5,6,7,8-tetrahydrofolate + H(+). The enzyme catalyses 5-formimidoyltetrahydrofolate + 2 H(+) = (6R)-5,10-methenyltetrahydrofolate + NH4(+). It functions in the pathway amino-acid degradation; L-histidine degradation into L-glutamate; L-glutamate from N-formimidoyl-L-glutamate (transferase route): step 1/1. It participates in one-carbon metabolism; tetrahydrofolate interconversion. Folate-dependent enzyme, that displays both transferase and deaminase activity. Serves to channel one-carbon units from formiminoglutamate to the folate pool. Functionally, binds and promotes bundling of vimentin filaments originating from the Golgi. This is Formimidoyltransferase-cyclodeaminase (Ftcd) from Mus musculus (Mouse).